The primary structure comprises 620 residues: Membrane protein insertase YidC (620 aa).

A helical transmembrane segment spans residues 7 to 27; that stretch reads NYLIAIALSVMVVLGWQFFYM. The span at 37–58 shows a compositional bias: low complexity; that stretch reads AEQAQQAQQAKTPATQATPGAA. The interval 37–77 is disordered; it reads AEQAQQAQQAKTPATQATPGAAVNGALPGQTQASATTSRED. The next 4 membrane-spanning stretches (helical) occupy residues 399 to 419, 469 to 489, 514 to 534, and 560 to 580; these read FGVA…PLAS, WPLL…YITI, LFGL…WPII, and WMPL…VIYW.

Belongs to the OXA1/ALB3/YidC family. Type 1 subfamily. In terms of assembly, interacts with the Sec translocase complex via SecD. Specifically interacts with transmembrane segments of nascent integral membrane proteins during membrane integration.

The protein resides in the cell inner membrane. Required for the insertion and/or proper folding and/or complex formation of integral membrane proteins into the membrane. Involved in integration of membrane proteins that insert both dependently and independently of the Sec translocase complex, as well as at least some lipoproteins. Aids folding of multispanning membrane proteins. This Allorhizobium ampelinum (strain ATCC BAA-846 / DSM 112012 / S4) (Agrobacterium vitis (strain S4)) protein is Membrane protein insertase YidC.